We begin with the raw amino-acid sequence, 415 residues long: Probable G-protein coupled receptor 19 (415 aa).

Residues 1-69 (MVFAHRMDND…LNPGEVATAS (69 aa)) lie on the Extracellular side of the membrane. N-linked (GlcNAc...) asparagine glycans are attached at residues N25 and N52. Residues 70 to 90 (IFFGALWLFSIFGNSLVCLVI) form a helical membrane-spanning segment. Residues 91 to 102 (HRSRRTQSTTNY) are Cytoplasmic-facing. A helical membrane pass occupies residues 103 to 123 (FVVSMACADLLISVASTPFVV). The Extracellular segment spans residues 124–152 (LQFTTGRWTLGSAMCKVVRYFQYLTPGVQ). The cysteines at positions 138 and 210 are disulfide-linked. The helical transmembrane segment at 153-173 (IYVLLSICIDRFYTIVYPLSF) threads the bilayer. The Cytoplasmic portion of the chain corresponds to 174–182 (KVSREKAKK). Residues 183–203 (MIAASWILDAAFVTPVFFFYG) traverse the membrane as a helical segment. The Extracellular portion of the chain corresponds to 204-221 (SNWDSHCNYFLPPSWEGT). The chain crosses the membrane as a helical span at residues 222–242 (AYTVIHFLVGFVIPSILIILF). The Cytoplasmic portion of the chain corresponds to 243–277 (YQKVIKYIWRIGTDGRTLRRTMNIVPRTKVKTVKM). Residues 278–298 (FLLLNLVFLFSWLPFHVAQLW) traverse the membrane as a helical segment. Residues 299–309 (HPHEQDYKKSS) are Extracellular-facing. A helical transmembrane segment spans residues 310–332 (LVFTAVTWVSFSSSASKPTLYSI). The Cytoplasmic portion of the chain corresponds to 333–415 (YNANFRRGMK…INSNPPNTFV (83 aa)).

This sequence belongs to the G-protein coupled receptor 1 family. In terms of tissue distribution, strongly expressed in the brain.

The protein resides in the cell membrane. G-protein coupled receptor that plays a role in the regulation of circadian rhythms and energy metabolism. Participates in maintaining proper circadian gene expression in the suprachiasmatic nucleus (SCN), the locus of the master circadian clock in the brain. May function as a coordinator of aging-associated metabolic dysfunction, stress response, DNA integrity management, and eventual senescence. Upon binding to adropin, modulates mitochondrial energy metabolism via the p44/42-PDK4 signaling pathway, influencing pyruvate dehydrogenase activity. This is Probable G-protein coupled receptor 19 (Gpr19) from Mus musculus (Mouse).